The primary structure comprises 433 residues: Glutamate-1-semialdehyde 2,1-aminomutase (433 aa).

Lys-273 bears the N6-(pyridoxal phosphate)lysine mark.

It belongs to the class-III pyridoxal-phosphate-dependent aminotransferase family. HemL subfamily. In terms of assembly, homodimer. The cofactor is pyridoxal 5'-phosphate.

It is found in the cytoplasm. The enzyme catalyses (S)-4-amino-5-oxopentanoate = 5-aminolevulinate. It functions in the pathway porphyrin-containing compound metabolism; protoporphyrin-IX biosynthesis; 5-aminolevulinate from L-glutamyl-tRNA(Glu): step 2/2. It participates in porphyrin-containing compound metabolism; chlorophyll biosynthesis. In Crocosphaera subtropica (strain ATCC 51142 / BH68) (Cyanothece sp. (strain ATCC 51142)), this protein is Glutamate-1-semialdehyde 2,1-aminomutase.